The chain runs to 82 residues: Beta-defensin 113 (82 aa).

Residues Met1–Cys16 form the signal peptide. Disulfide bonds link Cys35/Cys61, Cys42/Cys56, and Cys46/Cys62.

Belongs to the beta-defensin family.

It localises to the secreted. Its function is as follows. Has antibacterial activity. The chain is Beta-defensin 113 (DEFB113) from Homo sapiens (Human).